A 261-amino-acid chain; its full sequence is Zinc import ATP-binding protein ZnuC (261 aa).

Positions 6–221 (IRLEQVGVTF…PAFVELFGKN (216 aa)) constitute an ABC transporter domain. 38-45 (GPNGAGKT) contributes to the ATP binding site.

The protein belongs to the ABC transporter superfamily. Zinc importer (TC 3.A.1.15.5) family. In terms of assembly, the complex is composed of two ATP-binding proteins (ZnuC), two transmembrane proteins (ZnuB) and a solute-binding protein (ZnuA).

The protein resides in the cell inner membrane. The catalysed reaction is Zn(2+)(out) + ATP(in) + H2O(in) = Zn(2+)(in) + ADP(in) + phosphate(in) + H(+)(in). Functionally, part of the ABC transporter complex ZnuABC involved in zinc import. Responsible for energy coupling to the transport system. The polypeptide is Zinc import ATP-binding protein ZnuC (Pseudomonas fluorescens (strain ATCC BAA-477 / NRRL B-23932 / Pf-5)).